We begin with the raw amino-acid sequence, 153 residues long: UPF0756 membrane protein LSEI_1366 (153 aa).

4 helical membrane-spanning segments follow: residues 4–24, 52–72, 85–105, and 115–135; these read WLFLLGILAIAIVGKNKSLII, WGVTVISAAIMVPIATGEIGF, WIAIGCGVLVAVLSAKGVGLL, and LVFGTIIGVVFLKGIAAGPVI.

This sequence belongs to the UPF0756 family.

It localises to the cell membrane. This is UPF0756 membrane protein LSEI_1366 from Lacticaseibacillus paracasei (strain ATCC 334 / BCRC 17002 / CCUG 31169 / CIP 107868 / KCTC 3260 / NRRL B-441) (Lactobacillus paracasei).